Here is a 505-residue protein sequence, read N- to C-terminus: Glutamyl-tRNA(Gln) amidotransferase subunit A (505 aa).

Residues lysine 80 and serine 155 each act as charge relay system in the active site. Serine 179 (acyl-ester intermediate) is an active-site residue.

Belongs to the amidase family. GatA subfamily. In terms of assembly, heterotrimer of A, B and C subunits.

It carries out the reaction L-glutamyl-tRNA(Gln) + L-glutamine + ATP + H2O = L-glutaminyl-tRNA(Gln) + L-glutamate + ADP + phosphate + H(+). Functionally, allows the formation of correctly charged Gln-tRNA(Gln) through the transamidation of misacylated Glu-tRNA(Gln) in organisms which lack glutaminyl-tRNA synthetase. The reaction takes place in the presence of glutamine and ATP through an activated gamma-phospho-Glu-tRNA(Gln). The protein is Glutamyl-tRNA(Gln) amidotransferase subunit A of Acidothermus cellulolyticus (strain ATCC 43068 / DSM 8971 / 11B).